The chain runs to 230 residues: Fibrillarin-like rRNA/tRNA 2'-O-methyltransferase (230 aa).

S-adenosyl-L-methionine contacts are provided by residues 89–90 (TT), 107–108 (EV), 132–133 (DA), and 152–155 (DISQ).

It belongs to the methyltransferase superfamily. Fibrillarin family. In terms of assembly, interacts with nop5. Component of box C/D small ribonucleoprotein (sRNP) particles that contain rpl7ae, FlpA and nop5, plus a guide RNA.

In terms of biological role, involved in pre-rRNA and tRNA processing. Utilizes the methyl donor S-adenosyl-L-methionine to catalyze the site-specific 2'-hydroxyl methylation of ribose moieties in rRNA and tRNA. Site specificity is provided by a guide RNA that base pairs with the substrate. Methylation occurs at a characteristic distance from the sequence involved in base pairing with the guide RNA. This Thermoplasma acidophilum (strain ATCC 25905 / DSM 1728 / JCM 9062 / NBRC 15155 / AMRC-C165) protein is Fibrillarin-like rRNA/tRNA 2'-O-methyltransferase.